The chain runs to 206 residues: Ras-related protein Ral-A (206 aa).

Residue 21–28 (GSGGVGKS) coordinates GTP. The short motif at 43 to 51 (YEPTKADSY) is the Effector region element. Residues 68–72 (DTAGQ) and 127–130 (NKSD) each bind GTP. S194 is subject to Phosphoserine. C203 is modified (cysteine methyl ester). Residue C203 is the site of S-geranylgeranyl cysteine attachment. A propeptide spans 204-206 (CIL) (removed in mature form).

Belongs to the small GTPase superfamily. Ras family. In terms of assembly, interacts (via effector domain) with RALBP1; during mitosis, recruits RALBP1 to the mitochondrion where it promotes DNM1L phosphorylation and mitochondrial fission. Interacts with EXOC2/Sec5 and EXOC8/Exo84; binding to EXOC2 and EXOC8 is mutually exclusive. Interacts with Clostridium exoenzyme C3. Interacts with RALGPS1. Interacts with LPAR1 and LPAR2. Interacts with GRK2 in response to LPAR1 activation. RALA and GRK2 binding to LPAR1 is mutually exclusive. Interacts with CDC42. Prenylation is essential for membrane localization. In terms of processing, phosphorylated. Phosphorylation at Ser-194 by AURKA/Aurora kinase A, during mitosis, induces RALA localization to the mitochondrion where it regulates mitochondrial fission.

Its subcellular location is the cell membrane. The protein localises to the cleavage furrow. The protein resides in the midbody. It is found in the midbody ring. It localises to the mitochondrion. It carries out the reaction GTP + H2O = GDP + phosphate + H(+). With respect to regulation, alternates between an inactive form bound to GDP and an active form bound to GTP. Activated by a guanine nucleotide-exchange factor (GEF) and inactivated by a GTPase-activating protein (GAP). Multifunctional GTPase involved in a variety of cellular processes including gene expression, cell migration, cell proliferation, oncogenic transformation and membrane trafficking. Accomplishes its multiple functions by interacting with distinct downstream effectors. Acts as a GTP sensor for GTP-dependent exocytosis of dense core vesicles. Key regulator of LPAR1 signaling and competes with GRK2 for binding to LPAR1 thus affecting the signaling properties of the receptor. Required for anchorage-independent proliferation of transformed cells. The RALA-exocyst complex regulates integrin-dependent membrane raft exocytosis and growth signaling. During mitosis, supports the stabilization and elongation of the intracellular bridge between dividing cells. Cooperates with EXOC2 to recruit other components of the exocyst to the early midbody. During mitosis, also controls mitochondrial fission by recruiting to the mitochondrion RALBP1, which mediates the phosphorylation and activation of DNM1L by the mitotic kinase cyclin B-CDK1. This Mus musculus (Mouse) protein is Ras-related protein Ral-A (Rala).